A 194-amino-acid polypeptide reads, in one-letter code: dTTP/UTP pyrophosphatase (194 aa).

Residue Asp-66 is the Proton acceptor of the active site.

It belongs to the Maf family. YhdE subfamily. A divalent metal cation serves as cofactor.

It is found in the cytoplasm. It carries out the reaction dTTP + H2O = dTMP + diphosphate + H(+). The catalysed reaction is UTP + H2O = UMP + diphosphate + H(+). In terms of biological role, nucleoside triphosphate pyrophosphatase that hydrolyzes dTTP and UTP. May have a dual role in cell division arrest and in preventing the incorporation of modified nucleotides into cellular nucleic acids. This chain is dTTP/UTP pyrophosphatase, found in Anaeromyxobacter dehalogenans (strain 2CP-1 / ATCC BAA-258).